The sequence spans 242 residues: Ribonuclease PH (242 aa).

Phosphate is bound by residues Arg90 and 128 to 130 (GTR).

Belongs to the RNase PH family. In terms of assembly, homohexameric ring arranged as a trimer of dimers.

The catalysed reaction is tRNA(n+1) + phosphate = tRNA(n) + a ribonucleoside 5'-diphosphate. In terms of biological role, phosphorolytic 3'-5' exoribonuclease that plays an important role in tRNA 3'-end maturation. Removes nucleotide residues following the 3'-CCA terminus of tRNAs; can also add nucleotides to the ends of RNA molecules by using nucleoside diphosphates as substrates, but this may not be physiologically important. Probably plays a role in initiation of 16S rRNA degradation (leading to ribosome degradation) during starvation. In Nocardioides sp. (strain ATCC BAA-499 / JS614), this protein is Ribonuclease PH.